A 779-amino-acid polypeptide reads, in one-letter code: Subtilisin-like protease SBT3.18 (779 aa).

The signal sequence occupies residues 1–21 (MYFWVMFFTLMIKVKLYITNG). Residues 22–109 (DIFQNRPTVY…VFKSKSLKLH (88 aa)) constitute a propeptide, activation peptide. One can recognise an Inhibitor I9 domain in the interval 30–109 (VYVVYLGANR…VFKSKSLKLH (80 aa)). An N-linked (GlcNAc...) asparagine glycan is attached at Asn84. One can recognise a Peptidase S8 domain in the interval 113-621 (SWDFLGLAVD…AGHINPLKAM (509 aa)). Residues Asp144 and His221 each act as charge relay system in the active site. N-linked (GlcNAc...) asparagine glycans are attached at residues Asn236 and Asn406. Ser553 acts as the Charge relay system in catalysis.

Belongs to the peptidase S8 family.

It is found in the secreted. The chain is Subtilisin-like protease SBT3.18 from Arabidopsis thaliana (Mouse-ear cress).